The primary structure comprises 241 residues: Terpene cyclase terB (241 aa).

Helical transmembrane passes span 19–39 (LADT…GAMI), 48–68 (YCMG…YTLV), 75–95 (VELA…FAAT), 114–134 (LIFL…AAEI), and 137–157 (ALAY…GGVC). N163 is a glycosylation site (N-linked (GlcNAc...) asparagine). The next 2 membrane-spanning stretches (helical) occupy residues 169 to 189 (SVTL…FAFL) and 198 to 218 (FAWL…LADI).

This sequence belongs to the paxB family.

It localises to the membrane. The protein operates within secondary metabolite biosynthesis. Terpene cyclase; part of the gene cluster that mediates the biosynthesis of terpendoles, indole-diterpene (IDT) mycotoxins including terpendole I, terpendole K, terpendole C, as well as the kinesin Eg5 inhibitor terpendole E. Terpendoles biosynthesis begins with the synthesis of geranylgeranyl diphosphate (GGPP) by a yet unidentified GGPP synthase. Condensation of indole-3-glycerol phosphate with GGPP by the prenyltransferase terC then forms 3-geranylgeranylindole (3-GGI), followed by epoxidation and cyclization of this intermediate (by the FAD-dependent monooxygeanse terM and the terpene cyclase terB) to form paspaline. The cytochrome monooxygenase terQ then hydroxylates paspalline at C-11 to yield terpendole E. The cytochrome monooxygenase terP converts terpendole E to 13-desoxyterpendole I, and terQ converts 13-desoxyterpendole I into terpendole I. TerF and terK are required for conversion of terpendole I to terpendole C which is further converted to terpendole K. The polypeptide is Terpene cyclase terB (Tolypocladium album (Soil fungus)).